The primary structure comprises 214 residues: Small ribosomal subunit protein uS2 (214 aa).

The protein belongs to the universal ribosomal protein uS2 family.

This chain is Small ribosomal subunit protein uS2, found in Methanococcoides burtonii (strain DSM 6242 / NBRC 107633 / OCM 468 / ACE-M).